Here is an 891-residue protein sequence, read N- to C-terminus: DNA mismatch repair protein MutS (891 aa).

An ATP-binding site is contributed by 646–653; it reads GPNMAGKS.

Belongs to the DNA mismatch repair MutS family.

This protein is involved in the repair of mismatches in DNA. It is possible that it carries out the mismatch recognition step. This protein has a weak ATPase activity. This chain is DNA mismatch repair protein MutS, found in Rickettsia canadensis (strain McKiel).